Reading from the N-terminus, the 156-residue chain is MTQSQVTPNAREALTETIVDAKVRKNLTFEAINEGTGLSLAYTTAALLGQHALPENAAKLVAERLGLDDGAVRLLQTIPVRGSTPGGVPTDPTVYRFYEMVQVYGSTLKALVHEKFGDGIISAINFKLDIQKVPDPEGGERAVITLNGKYLPTKPF.

Catalysis depends on residues Arg96, Glu99, and Ser122.

The protein belongs to the cyanase family.

It catalyses the reaction cyanate + hydrogencarbonate + 3 H(+) = NH4(+) + 2 CO2. In terms of biological role, catalyzes the reaction of cyanate with bicarbonate to produce ammonia and carbon dioxide. The polypeptide is Cyanate hydratase (Burkholderia vietnamiensis (strain G4 / LMG 22486) (Burkholderia cepacia (strain R1808))).